Consider the following 421-residue polypeptide: Bifunctional NAD biosynthesis protein NadR (421 aa).

The interval 57-224 (EKKVGVIFGK…KFIPKEARPF (168 aa)) is nicotinamide mononucleotide adenylyltransferase. NAD(+) contacts are provided by residues 64 to 67 (FGKF), H71, R98, 139 to 152 (EDGI…WQSW), 172 to 174 (SSE), 199 to 201 (FNV), 254 to 256 (SAW), and 289 to 292 (YIDY). The segment at 225–421 (FAKTVAILGG…TTFPIKGTSQ (197 aa)) is ribosylnicotinamide kinase.

The protein in the N-terminal section; belongs to the bacterial NMN adenylyltransferase family. This sequence in the C-terminal section; belongs to the bacterial RNK family. In terms of assembly, homotetramer.

It is found in the cell membrane. The protein resides in the cytoplasm. The catalysed reaction is beta-nicotinamide D-ribonucleotide + ATP + H(+) = diphosphate + NAD(+). The enzyme catalyses beta-nicotinamide D-riboside + ATP = beta-nicotinamide D-ribonucleotide + ADP + H(+). Its pathway is cofactor biosynthesis; NAD(+) biosynthesis [regulation]. It participates in cofactor biosynthesis; NAD(+) biosynthesis; NAD(+) from nicotinamide D-ribonucleotide: step 1/1. Its activity is regulated as follows. Feed-back regulated by NAD. At high levels of NAD the RN kinase activity is inhibited. Its function is as follows. This enzyme has two activities: nicotinamide mononucleotide (NMN) adenylyltransferase and ribosylnicotinamide (RN) kinase. The RN kinase activity catalyzes the phosphorylation of RN to form nicotinamide ribonucleotide. The NMN adenylyltransferase activity catalyzes the transfer of the AMP moiety of ATP to nicotinamide ribonucleotide to form NAD(+). In Haemophilus influenzae (strain ATCC 51907 / DSM 11121 / KW20 / Rd), this protein is Bifunctional NAD biosynthesis protein NadR (nadR).